The following is a 277-amino-acid chain: General transcription factor IIF subunit 2 (277 aa).

It belongs to the TFIIF beta subunit family. As to quaternary structure, heterodimer of an alpha and a beta subunit.

The protein localises to the nucleus. Its function is as follows. TFIIF is a general transcription initiation factor that binds to RNA polymerase II and helps to recruit it to the initiation complex in collaboration with TFIIB. This Drosophila melanogaster (Fruit fly) protein is General transcription factor IIF subunit 2 (TfIIFbeta).